An 82-amino-acid chain; its full sequence is Small ribosomal subunit protein bS16c (82 aa).

Belongs to the bacterial ribosomal protein bS16 family.

The protein localises to the plastid. It is found in the chloroplast. In Pyropia yezoensis (Susabi-nori), this protein is Small ribosomal subunit protein bS16c.